The sequence spans 118 residues: Beta-2-microglobulin (118 aa).

A signal peptide spans M1–A21. The 88-residue stretch at P26 to K113 folds into the Ig-like C1-type domain. An intrachain disulfide couples C46 to C101.

It belongs to the beta-2-microglobulin family. Heterodimer of an alpha chain and a beta chain. Beta-2-microglobulin is the beta-chain of major histocompatibility complex class I molecules.

Its subcellular location is the secreted. Functionally, component of the class I major histocompatibility complex (MHC). Involved in the presentation of peptide antigens to the immune system. This is Beta-2-microglobulin (B2M) from Ornithorhynchus anatinus (Duckbill platypus).